Reading from the N-terminus, the 407-residue chain is 12S rRNA N(4)-cytidine methyltransferase METTL15 (407 aa).

The tract at residues Glu44–Arg63 is disordered. S-adenosyl-L-methionine-binding positions include Gly100 to His102, Asp119, Phe146, Asp169, and Gln176. At Ser358 the chain carries Phosphoserine. The tract at residues Glu386–Leu407 is disordered. Residues Arg397–Leu407 are compositionally biased toward basic residues.

Belongs to the methyltransferase superfamily. RsmH family.

It is found in the mitochondrion matrix. It carries out the reaction cytidine(839) in 12S rRNA + S-adenosyl-L-methionine = N(4)-methylcytidine(839) in 12S rRNA + S-adenosyl-L-homocysteine + H(+). Its function is as follows. N4-methylcytidine (m4C) methyltransferase responsible for the methylation of position C839 in mitochondrial 12S rRNA. Involved in the stabilization of 12S rRNA folding, therefore facilitating the assembly of the mitochondrial small ribosomal subunits. This Bos taurus (Bovine) protein is 12S rRNA N(4)-cytidine methyltransferase METTL15 (METTL15).